Here is a 761-residue protein sequence, read N- to C-terminus: Translational repressor ifet-1 (761 aa).

Disordered stretches follow at residues 101–274, 386–446, 557–592, 681–702, and 730–761; these read SPQR…SSGG, KGME…QHLH, VQRQLQKSSSNADQKKEKTSQSPPESNQETSDAHNQ, QQAQMANMQERQGPSHNQQQHQ, and GSQFTGSGDRIPSSVRPMSLEDLEKQLTAVPK. Composition is skewed to basic and acidic residues over residues 114-128, 164-189, and 212-222; these read PTDDKGRDGEYERLG, RGTRGAEWKKDTTRGAKFAPRREERL, and IELRGFDEPKK. 4 stretches are compositionally biased toward polar residues: residues 400–410, 557–568, 576–592, and 690–702; these read QDPSQQAQLLQ, VQRQLQKSSSNA, SQSPPESNQETSDAHNQ, and ERQGPSHNQQQHQ.

In terms of assembly, interacts with cgh-1. Interacts with ife-1 and oma-1. In terms of tissue distribution, in the embryo, significantly enriched in the germ cell lineage.

The protein resides in the cytoplasm. In terms of biological role, involved in translational repression of multiple mRNAs in the distal gonad. Recruited to the 3' untranslated region (UTR) of zif-1 by oma-1 and is required for translational repression of zif-1. May also be involved in translational repression of mei-1 through recruitment to the mei-1 3' UTR by oma-1. Required for oogenesis but not spermatogenesis, for P granule formation and for the localization of car-1 and cgh-1 to P granules. Required for normal spindle orientation in early embryos. In Caenorhabditis elegans, this protein is Translational repressor ifet-1.